The sequence spans 1620 residues: Putative zinc carboxypeptidase (1620 aa).

The Extracellular portion of the chain corresponds to 1–1367 (MLFKNEDSGN…SYDFLYFDEN (1367 aa)). Residue N19 is glycosylated (N-linked (GlcNAc...) asparagine). The disordered stretch occupies residues 32–74 (RNDNKNNDNEDNKQDDEEKNDEDDNKSNLLLEENEENKRQGDK). Residues 33–43 (NDNKNNDNEDN) are compositionally biased toward basic and acidic residues. Acidic residues predominate over residues 44–55 (KQDDEEKNDEDD). N56 and N102 each carry an N-linked (GlcNAc...) asparagine glycan. Residues 309 to 328 (GNHYDAHESTNTYDEEKTRE) are disordered. N354, N487, N508, N529, N550, N571, N589, N687, N802, and N1010 each carry an N-linked (GlcNAc...) asparagine glycan. Residues 497–559 (VNNLDSTVNY…NSTGNNINNI (63 aa)) are possible malaria epitope. Residues 1004-1261 (GENKKNNGTK…FYVQNYFEGY (258 aa)) form the Peptidase M14 domain. Residues H1059 and E1062 each contribute to the Zn(2+) site. N-linked (GlcNAc...) asparagine glycosylation is found at N1064 and N1141. H1155 is a Zn(2+) binding site. E1229 acts as the Proton donor/acceptor in catalysis. Residues 1279–1329 (NIKGDDNINGDDNIKGGDNIKGDDNIKRDDNFQRDDNFQRDDNFQRGDNFH) form a disordered region. Residues 1368 to 1388 (LLFMTGVSFGICLFKFINFLS) traverse the membrane as a helical segment. At 1389-1620 (YHKSSICRRT…SKRKKVIVIL (232 aa)) the chain is on the cytoplasmic side. The disordered stretch occupies residues 1560–1620 (PNGKYKGPGF…SKRKKVIVIL (61 aa)). A compositionally biased stretch (basic and acidic residues) spans 1581–1597 (NKNESKTEKKSKTENKS). The span at 1598-1620 (KSKSKNKSKSKNKSKRKKVIVIL) shows a compositional bias: basic residues.

The protein belongs to the peptidase M14 family. Zn(2+) is required as a cofactor.

It localises to the membrane. In Plasmodium falciparum (isolate 3D7), this protein is Putative zinc carboxypeptidase.